The primary structure comprises 331 residues: Putative serine/threonine-protein kinase ZK507.1 (331 aa).

One can recognise a Protein kinase domain in the interval 1 to 270; it reads MKVNEEGFAI…CKLTLKEPLV (270 aa). Residue D116 is the Proton acceptor of the active site. Basic and acidic residues predominate over residues 302–314; sequence SDRNEENSLDRSK. A disordered region spans residues 302 to 331; the sequence is SDRNEENSLDRSKTGTLSFNNSKNKKPSRY.

It belongs to the protein kinase superfamily. Ser/Thr protein kinase family.

The catalysed reaction is L-seryl-[protein] + ATP = O-phospho-L-seryl-[protein] + ADP + H(+). It carries out the reaction L-threonyl-[protein] + ATP = O-phospho-L-threonyl-[protein] + ADP + H(+). The polypeptide is Putative serine/threonine-protein kinase ZK507.1 (Caenorhabditis elegans).